The sequence spans 469 residues: Argininosuccinate lyase (469 aa).

Belongs to the lyase 1 family. Argininosuccinate lyase subfamily.

The protein resides in the cytoplasm. The enzyme catalyses 2-(N(omega)-L-arginino)succinate = fumarate + L-arginine. It functions in the pathway amino-acid biosynthesis; L-arginine biosynthesis; L-arginine from L-ornithine and carbamoyl phosphate: step 3/3. This is Argininosuccinate lyase from Burkholderia thailandensis (strain ATCC 700388 / DSM 13276 / CCUG 48851 / CIP 106301 / E264).